A 322-amino-acid polypeptide reads, in one-letter code: Phosphoserine phosphatase (322 aa).

A substrate-binding site is contributed by 10-12; the sequence is PED. Residues aspartate 12, aspartate 116, and aspartate 118 each coordinate Mg(2+). Aspartate 116 acts as the Nucleophile in catalysis. The active-site Proton donor is aspartate 118. Residues glutamate 125, arginine 161, 204-205, and lysine 249 contribute to the substrate site; that span reads SG. Aspartate 272 contributes to the Mg(2+) binding site. Substrate is bound at residue asparagine 275.

The protein belongs to the HAD-like hydrolase superfamily. SerB family. Mg(2+) serves as cofactor.

It carries out the reaction O-phospho-L-serine + H2O = L-serine + phosphate. The catalysed reaction is O-phospho-D-serine + H2O = D-serine + phosphate. Its pathway is amino-acid biosynthesis; L-serine biosynthesis; L-serine from 3-phospho-D-glycerate: step 3/3. In terms of biological role, catalyzes the dephosphorylation of phosphoserine (P-Ser). The polypeptide is Phosphoserine phosphatase (serB) (Escherichia coli O157:H7).